Reading from the N-terminus, the 298-residue chain is Protoheme IX farnesyltransferase (298 aa).

9 consecutive transmembrane segments (helical) span residues 24-44 (VIQL…PGLP), 49-69 (LQLA…AAAF), 100-120 (LLFS…WVNP), 121-141 (LTMW…TVIL), 149-169 (IVIG…AMAG), 175-195 (ALIL…ALAL), 220-240 (LMVL…YVYG), 244-264 (WLYL…AFYL), and 277-297 (FRFS…DHYL).

Belongs to the UbiA prenyltransferase family. Protoheme IX farnesyltransferase subfamily.

The protein resides in the cell inner membrane. The enzyme catalyses heme b + (2E,6E)-farnesyl diphosphate + H2O = Fe(II)-heme o + diphosphate. It participates in porphyrin-containing compound metabolism; heme O biosynthesis; heme O from protoheme: step 1/1. Its function is as follows. Converts heme B (protoheme IX) to heme O by substitution of the vinyl group on carbon 2 of heme B porphyrin ring with a hydroxyethyl farnesyl side group. This chain is Protoheme IX farnesyltransferase, found in Albidiferax ferrireducens (strain ATCC BAA-621 / DSM 15236 / T118) (Rhodoferax ferrireducens).